Here is a 312-residue protein sequence, read N- to C-terminus: Putative pyridoxal kinase BUD16 (312 aa).

Substrate contacts are provided by serine 9, threonine 44, and tyrosine 122. ATP contacts are provided by residues 183–184 (TS) and 211–223 (RVPF…TGVG). Aspartate 224 serves as a coordination point for substrate.

The protein belongs to the pyridoxine kinase family. It depends on a divalent metal cation as a cofactor.

Its subcellular location is the cytoplasm. It is found in the nucleus. It catalyses the reaction pyridoxal + ATP = pyridoxal 5'-phosphate + ADP + H(+). Required for synthesis of pyridoxal-5-phosphate from vitamin B6. Important for bud site selection. This Saccharomyces cerevisiae (strain ATCC 204508 / S288c) (Baker's yeast) protein is Putative pyridoxal kinase BUD16 (BUD16).